Consider the following 316-residue polypeptide: Putative S-adenosyl-L-methionine-dependent methyltransferase MAB_4606c (316 aa).

Residues aspartate 137 and aspartate 166 to leucine 167 contribute to the S-adenosyl-L-methionine site.

It belongs to the UPF0677 family.

Its function is as follows. Exhibits S-adenosyl-L-methionine-dependent methyltransferase activity. The sequence is that of Putative S-adenosyl-L-methionine-dependent methyltransferase MAB_4606c from Mycobacteroides abscessus (strain ATCC 19977 / DSM 44196 / CCUG 20993 / CIP 104536 / JCM 13569 / NCTC 13031 / TMC 1543 / L948) (Mycobacterium abscessus).